A 494-amino-acid chain; its full sequence is Probable cytochrome P450 515A1 (494 aa).

Residues 1 to 21 (MILGIILGLFIYIYLINIKFF) traverse the membrane as a helical segment. Residue Cys440 coordinates heme.

The protein belongs to the cytochrome P450 family. Heme serves as cofactor.

Its subcellular location is the membrane. The chain is Probable cytochrome P450 515A1 (cyp515A1) from Dictyostelium discoideum (Social amoeba).